The following is a 406-amino-acid chain: Odorant receptor 10a (406 aa).

Over 1-45 (MSEWLRFLKRDQQLDVYFFAVPRLSLDIMGYWPGKTGDTWPWRSL) the chain is Cytoplasmic. A helical membrane pass occupies residues 46–66 (IHFAILAIGVATELHAGMCFL). Residues 67–74 (DRQQITLA) are Extracellular-facing. Residues 75-95 (LETLCPAGTSAVTLLKMFLML) traverse the membrane as a helical segment. The Cytoplasmic portion of the chain corresponds to 96–143 (RFRQDLSIMWNRLRGLLFDPNWERPEQRDIRLKHSAMAARINFWPLSA). The helical transmembrane segment at 144–164 (GFFTCTTYNLKPILIAMILYL) threads the bilayer. The Extracellular portion of the chain corresponds to 165-189 (QNRYEDFVWFTPFNMTMPKVLLNYP). Asn-178 is a glycosylation site (N-linked (GlcNAc...) asparagine). Residues 190–210 (FFPLTYIFIAYTGYVTIFMFG) traverse the membrane as a helical segment. Residues 211–281 (GCDGFYFEFC…LTRFFRDRYT (71 aa)) are Cytoplasmic-facing. The chain crosses the membrane as a helical span at residues 282–302 (IITLAHFVSAAMVIGFSMVNL). The Extracellular segment spans residues 303–308 (LTLGNN). A helical transmembrane segment spans residues 309–329 (GLGAMLYVAYTVAALSQLLVY). The Cytoplasmic segment spans residues 330–372 (CYGGTLVAESSTGLCRAMFSCPWQLFKPKQRRLVQLLILRSQR). A helical membrane pass occupies residues 373-393 (PVSMAVPFFSPSLATFAAILQ). Residues 394–406 (TSGSIIALVKSFQ) lie on the Extracellular side of the membrane.

It belongs to the insect chemoreceptor superfamily. Heteromeric odorant receptor channel (TC 1.A.69) family. Or1a subfamily. In terms of assembly, interacts with Orco. Complexes exist early in the endomembrane system in olfactory sensory neurons (OSNs), coupling these complexes to the conserved ciliary trafficking pathway. As to expression, expressed in olfactory sensory neurons in the antenna.

It localises to the cell membrane. In terms of biological role, odorant receptor which mediates acceptance or avoidance behavior, depending on its substrates. The odorant receptor repertoire encodes a large collection of odor stimuli that vary widely in identity, intensity, and duration. May form a complex with Orco to form odorant-sensing units, providing sensitive and prolonged odorant signaling and calcium permeability. Involved in the behavioral responses to esters, and specifically to ethyl hexanoate, benzaldehyde, and acetophenone. In Drosophila melanogaster (Fruit fly), this protein is Odorant receptor 10a (Or10a).